A 91-amino-acid polypeptide reads, in one-letter code: Small ribosomal subunit protein uS19 (91 aa).

This sequence belongs to the universal ribosomal protein uS19 family.

Its function is as follows. Protein S19 forms a complex with S13 that binds strongly to the 16S ribosomal RNA. The chain is Small ribosomal subunit protein uS19 from Trichodesmium erythraeum (strain IMS101).